A 395-amino-acid polypeptide reads, in one-letter code: MRRLFTSESVTEGHPDKIADQISDAILDAMLEQDPRSRVAVETLVTTGLVIIAGEVTTRAYVEIPDIARKTILEIGYTRAKYGFDGETCGVLTSIHSQSPDIALGVDKALEVKTGEEVADEFEALGAGDQGIMFGYATNETPEYMPLPITLAHKLAMRLAEVRKNGTLPFLRPDGKTQVTIEYEDDKPVRVDTVLISTQHDPDISQADLREAIIEHVINPVIPEQYRDDKMKILVNPTGRFVLGGPMADTGLTGRKIIVDTYGGWVPHGGGAFSGKDPTKVDRSAHYMARYVAKNVVAAGLADKFLIQLSYAIGVAKPVSIMIDTYGTAKVDEDKLLKVITELFDFRPGAIIKKLNLLRPIYRKTAAYGHFGRNEEEFTWEKLDMVDELKRAFNM.

Histidine 14 contributes to the ATP binding site. Position 16 (aspartate 16) interacts with Mg(2+). Glutamate 42 contacts K(+). L-methionine is bound by residues glutamate 55 and glutamine 98. A flexible loop region spans residues 98 to 108; that stretch reads QSPDIALGVDK. Residues 174–176, 240–241, aspartate 249, 255–256, alanine 272, and lysine 276 each bind ATP; these read DGK, RF, and RK. An L-methionine-binding site is contributed by aspartate 249. L-methionine is bound at residue lysine 280.

Belongs to the AdoMet synthase family. Homotetramer; dimer of dimers. Mg(2+) serves as cofactor. The cofactor is K(+).

The protein resides in the cytoplasm. The catalysed reaction is L-methionine + ATP + H2O = S-adenosyl-L-methionine + phosphate + diphosphate. The protein operates within amino-acid biosynthesis; S-adenosyl-L-methionine biosynthesis; S-adenosyl-L-methionine from L-methionine: step 1/1. Its function is as follows. Catalyzes the formation of S-adenosylmethionine (AdoMet) from methionine and ATP. The overall synthetic reaction is composed of two sequential steps, AdoMet formation and the subsequent tripolyphosphate hydrolysis which occurs prior to release of AdoMet from the enzyme. The polypeptide is S-adenosylmethionine synthase (Thermotoga maritima (strain ATCC 43589 / DSM 3109 / JCM 10099 / NBRC 100826 / MSB8)).